A 426-amino-acid chain; its full sequence is MSTLVIVGTQWGDEGKGKITDYLAEKADVVVRYQGGNNAGHTVEKEGVQYKLHLIPSGILYSEKICIIGNGVVVDPASLIEEIENLQKQGISVDNLKISDRAHIVFPYHIKQDELEEISKGKNDLGTTKRGIGPCYMDKSERIGIRVCDLLKPKVFEEKLRRNVEKKNKLFKELYGAEGFDFEEMYQKYLEYAEKIKPFVTDTTVLLYDLIKSGKKVLFEGAQGTLLDLDLGTYPYVTASHPIAGGVTVGAGIGPTMIDEVMGVVKAYTTRVGKGPFPTELFDENGEFLREKGHEYGTTTGRARRCGWLDAVILKYSVRVSGITHFALTKLDTLTGLKKIKICTGYKFNGRIITDFPASLEDLAQCEPVYEEFDGWEEDIQGAKTFDDLPYNAQKYIRRIEELIGIKAAIISVGPERNQTIVLRDF.

Residues 12–18 (GDEGKGK) and 40–42 (GHT) contribute to the GTP site. The Proton acceptor role is filled by Asp-13. Residues Asp-13 and Gly-40 each coordinate Mg(2+). IMP is bound by residues 13 to 16 (DEGK), 38 to 41 (NAGH), Thr-128, Arg-142, Gln-223, Thr-238, and Arg-302. The Proton donor role is filled by His-41. 298–304 (TTTGRAR) provides a ligand contact to substrate. Residues Arg-304, 330–332 (KLD), and 412–414 (SVG) each bind GTP.

It belongs to the adenylosuccinate synthetase family. As to quaternary structure, homodimer. Mg(2+) is required as a cofactor.

The protein localises to the cytoplasm. It carries out the reaction IMP + L-aspartate + GTP = N(6)-(1,2-dicarboxyethyl)-AMP + GDP + phosphate + 2 H(+). It functions in the pathway purine metabolism; AMP biosynthesis via de novo pathway; AMP from IMP: step 1/2. Functionally, plays an important role in the de novo pathway of purine nucleotide biosynthesis. Catalyzes the first committed step in the biosynthesis of AMP from IMP. The protein is Adenylosuccinate synthetase of Thermoanaerobacter pseudethanolicus (strain ATCC 33223 / 39E) (Clostridium thermohydrosulfuricum).